Consider the following 547-residue polypeptide: Inositol 1,4,5-trisphosphate receptor-interacting protein-like 1 (547 aa).

The signal sequence occupies residues 1 to 16; sequence MAVISLLFLAVMYVVH. Residues 17–96 are Extracellular-facing; that stretch reads HPLMVSDRMD…PFQASGQDGG (80 aa). The stretch at 28-66 forms a coiled coil; that stretch reads DTLARSRQLEKRMSEEMRQLEIEFEERSRAAEEKQKAEN. Residues 97–117 form a helical membrane-spanning segment; that stretch reads PLGWMLGNLWNAGLFCLFLIF. Topologically, residues 118–547 are cytoplasmic; sequence ELLRQNMQHE…LPCSPLAGGL (430 aa).

This sequence belongs to the ITPRIP family.

Its subcellular location is the cell membrane. Its function is as follows. Functions as a ligand of CD3E, inhibiting TCR-CD3 complex signaling to regulate T cell activation. Induces stable CD3E-NCK1 binding, thereby preventing the CD3E-ZAP70 interaction and subsequently inhibiting the activation of the downstream ERK-NFkB signaling cascade and calcium influx. In Rattus norvegicus (Rat), this protein is Inositol 1,4,5-trisphosphate receptor-interacting protein-like 1 (Itpripl1).